The following is a 259-amino-acid chain: Phosphatidylglycerol--prolipoprotein diacylglyceryl transferase (259 aa).

Transmembrane regions (helical) follow at residues 9–29 (LGPLAIRWYSICIVTGLILAV), 48–68 (DFILIAFPLAIVGARLYYVIF), 83–103 (IWHGGIAIYGGLLTGALVLFI), 114–133 (DFLDVATPGVMLAQSIGRWG), 167–187 (TPTFLYESLWNLLGFIIIMIL), 197–217 (GEVAFFYLIWYGSGRFVIEGM), and 227–247 (LRVSQWLSVLLVVVGVILIVI). Residue arginine 131 coordinates a 1,2-diacyl-sn-glycero-3-phospho-(1'-sn-glycerol).

This sequence belongs to the Lgt family.

The protein localises to the cell membrane. The enzyme catalyses L-cysteinyl-[prolipoprotein] + a 1,2-diacyl-sn-glycero-3-phospho-(1'-sn-glycerol) = an S-1,2-diacyl-sn-glyceryl-L-cysteinyl-[prolipoprotein] + sn-glycerol 1-phosphate + H(+). The protein operates within protein modification; lipoprotein biosynthesis (diacylglyceryl transfer). Catalyzes the transfer of the diacylglyceryl group from phosphatidylglycerol to the sulfhydryl group of the N-terminal cysteine of a prolipoprotein, the first step in the formation of mature lipoproteins. This is Phosphatidylglycerol--prolipoprotein diacylglyceryl transferase from Streptococcus mutans serotype c (strain ATCC 700610 / UA159).